We begin with the raw amino-acid sequence, 266 residues long: Transmembrane domain-containing protein TMIGD3 (266 aa).

Positions 1 to 20 are disordered; the sequence is MEGSPAGPIEQKEARWESSW. The helical transmembrane segment at 55–75 threads the bilayer; it reads FLPVMWLFILLSLALISDAMV. The N-linked (GlcNAc...) asparagine glycan is linked to asparagine 192. A helical membrane pass occupies residues 213–233; sequence ILIICILITGLGIISVISHLT.

Expressed in the lung and bone. Expressed at lower levels in osteosarcoma tissues (at protein level).

Its subcellular location is the membrane. Functionally, plays a suppressive role in osteosarcoma malignancy by inhibiting NF-kappa-B activity. This is Transmembrane domain-containing protein TMIGD3 from Homo sapiens (Human).